A 624-amino-acid polypeptide reads, in one-letter code: Kelch-like ECH-associated protein 1 (624 aa).

C38 bears the S-(2-succinyl)cysteine mark. The region spanning 77–149 is the BTB domain; sequence CDVTLQVKYQ…AYTASISMGE (73 aa). Residue R135 forms an N5-[4-(S-L-cysteinyl)-5-methyl-1H-imidazol-2-yl]-L-ornithine (Arg-Cys) (interchain with C-151 in KEAP1) linkage. C151 is subject to S-(2,3-dicarboxypropyl)cysteine; alternate. S-(2-succinyl)cysteine; alternate is present on C151. C151 carries the post-translational modification S-nitrosocysteine; alternate. C151 participates in a covalent cross-link: N5-[4-(S-L-cysteinyl)-5-methyl-1H-imidazol-2-yl]-L-ornithine (Cys-Arg) (interchain with R-135 in KEAP1). Positions 184–286 constitute a BACK domain; sequence AIGIANFAEQ…TPNFLQMQLQ (103 aa). C241 carries the post-translational modification S-(2-succinyl)cysteine. S-(2,3-dicarboxypropyl)cysteine is present on residues C257 and C273. C288 carries the S-(2,3-dicarboxypropyl)cysteine; alternate modification. C288 bears the S-(2-succinyl)cysteine; alternate mark. C319 is subject to S-(2-succinyl)cysteine. 6 Kelch repeats span residues 327 to 372, 373 to 423, 424 to 470, 471 to 517, 518 to 564, and 565 to 611; these read LIYT…VVGG, LLYA…VIDG, HIYA…VLNR, LLYA…VLHN, CIYA…VHQG, and RIYV…VTME. C434 carries the S-cGMP-cysteine modification. S-(2-succinyl)cysteine is present on C613.

This sequence belongs to the KEAP1 family. In terms of assembly, component of the BCR(KEAP1) E3 ubiquitin ligase complex, at least composed of 2 molecules of CUL3, 2 molecules of KEAP1, and RBX1. Interacts with NFE2L2/NRF2; the interaction is direct. Forms a ternary complex with NFE2L2/NRF2 and PGAM5. Interacts with (phosphorylated) SQSTM1/p62; the interaction is direct and inactivates the BCR(KEAP1) complex by sequestering it in inclusion bodies, promoting its degradation. Interacts with NFE2L1. Interacts with BPTF and PTMA. Interacts with MAP1LC3B. Interacts indirectly with ENC1. Interacts with SESN1 and SESN2. Interacts with HSP90AA1 and HSP90AB1. Interacts with PGCKA1; this interaction prevents the ubiquitination of KEAP1 by TRIM25, thus protecting KEAP1 from degradation. As to quaternary structure, (Microbial infection) Interacts with ebolavirus protein VP24; this interaction activates transcription factor NFE2L2/NRF2 by blocking its interaction with KEAP1. Non-enzymatic covalent modifications of reactive cysteines by electrophile metabolites inactivate the BCR(KEAP1) complex. Accumulation of fumarate promotes the formation of cysteine S-succination (S-(2-succinyl)cysteine), leading to inactivate the BCR(KEAP1) complex and promote NFE2L2/NRF2 nuclear accumulation and activation. Nitric oxide-dependent 8-Nitro-cGMP formation promotes cysteine guanylation (S-cGMP-cysteine), leading to NFE2L2/NRF2 nuclear accumulation and activation. Itaconate, an anti-inflammatory metabolite generated in response to lipopolysaccharide, alkylates cysteines, activating NFE2L2/NRF2. Methylglyoxal, a reactive metabolite that accumulates when the glycolytic enzyme PGK1 is inhibited, promotes formation of a methylimidazole cross-link between proximal Cys-151 and Arg-135 on another KEAP1 molecule, resulting in an inactive dimer that inactivates the BCR(KEAP1) complex. Post-translationally, degraded via a proteasomal-independent process during selective autophagy: interaction with phosphorylated SQSTM1/p62 sequesters KEAP1 in inclusion bodies, leading to its degradation. In terms of processing, auto-ubiquitinated by the BCR(KEAP1) complex. Quinone-induced oxidative stress, but not sulforaphane, increases its ubiquitination. Ubiquitination and subsequent degradation is most pronounced following prolonged exposure of cells to oxidative stress, particularly in glutathione-deficient cells that are highly susceptible to oxidative stress. Deubiquitinated by USP25; leading to stabilization. Ubiquitinated by TRIM25; leading to degradation upon ER stress. In terms of tissue distribution, broadly expressed, with highest levels in skeletal muscle.

The protein resides in the cytoplasm. It localises to the nucleus. The protein operates within protein modification; protein ubiquitination. Ubiquitin ligase activity of the BCR(KEAP1) complex is inhibited by oxidative stress and electrophile metabolites such as sulforaphane. Electrophile metabolites react with reactive cysteine residues in KEAP1 and trigger non-enzymatic covalent modifications of these cysteine residues, leading to inactivate the ubiquitin ligase activity of the BCR(KEAP1) complex. Selective autophagy also inactivates the BCR(KEAP1) complex via interaction between KEAP1 and SQSTM1/p62, which sequesters the complex in inclusion bodies and promotes its degradation. Functionally, substrate-specific adapter of a BCR (BTB-CUL3-RBX1) E3 ubiquitin ligase complex that regulates the response to oxidative stress by targeting NFE2L2/NRF2 for ubiquitination. KEAP1 acts as a key sensor of oxidative and electrophilic stress: in normal conditions, the BCR(KEAP1) complex mediates ubiquitination and degradation of NFE2L2/NRF2, a transcription factor regulating expression of many cytoprotective genes. In response to oxidative stress, different electrophile metabolites trigger non-enzymatic covalent modifications of highly reactive cysteine residues in KEAP1, leading to inactivate the ubiquitin ligase activity of the BCR(KEAP1) complex, promoting NFE2L2/NRF2 nuclear accumulation and expression of phase II detoxifying enzymes. In response to selective autophagy, KEAP1 is sequestered in inclusion bodies following its interaction with SQSTM1/p62, leading to inactivation of the BCR(KEAP1) complex and activation of NFE2L2/NRF2. The BCR(KEAP1) complex also mediates ubiquitination of SQSTM1/p62, increasing SQSTM1/p62 sequestering activity and degradation. The BCR(KEAP1) complex also targets BPTF and PGAM5 for ubiquitination and degradation by the proteasome. The protein is Kelch-like ECH-associated protein 1 of Homo sapiens (Human).